The chain runs to 190 residues: uncharacterized protein (190 aa).

Residues M1–S28 form the signal peptide.

This is an uncharacterized protein from Haemophilus influenzae (strain ATCC 51907 / DSM 11121 / KW20 / Rd).